Here is a 477-residue protein sequence, read N- to C-terminus: V-type ATP synthase beta chain (477 aa).

This sequence belongs to the ATPase alpha/beta chains family.

In terms of biological role, produces ATP from ADP in the presence of a proton gradient across the membrane. The V-type beta chain is a regulatory subunit. The chain is V-type ATP synthase beta chain from Anaeromyxobacter dehalogenans (strain 2CP-1 / ATCC BAA-258).